The sequence spans 283 residues: 2-hydroxymuconate semialdehyde hydrolase (283 aa).

In terms of domain architecture, AB hydrolase-1 spans 32–262; the sequence is LMMIHGSGPG…QCGHWTQIEH (231 aa). Residues Ser107, Asp228, and His256 contribute to the active site.

The protein belongs to the DmpD/TodF/XylF esterase family.

It catalyses the reaction (2Z,4E)-2-hydroxy-6-oxohexa-2,4-dienoate + H2O = 2-oxopent-4-enoate + formate + H(+). It functions in the pathway aromatic compound metabolism; benzoate degradation via hydroxylation. Its function is as follows. Catalyzes the conversion of 2-hydroxymuconate semialdehyde to 2-hydroxypent-2,4-dienoate. In Pseudomonas sp. (strain CF600), this protein is 2-hydroxymuconate semialdehyde hydrolase (dmpD).